The primary structure comprises 379 residues: Armadillo repeat-containing X-linked protein 3 (379 aa).

The Mitochondrial intermembrane portion of the chain corresponds to 1 to 6 (MGYARK). Mitochondrion outer membrane (MOM)-targeting sequence regions lie at residues 1-6 (MGYARK) and 26-37 (RLTRGRKQNKEK). The helical; Signal-anchor transmembrane segment at 7–29 (VGWVTAGLVIGAGACYCIYRLTR) threads the bilayer. At 30–379 (GRKQNKEKMA…AEHMFPKSQE (350 aa)) the chain is on the cytoplasmic side. Ser61, Ser67, and Ser72 each carry phosphoserine. Positions 89–98 (RARARARARA) are nuclear localization signal. Ser110 is subject to Phosphoserine. ARM repeat units follow at residues 111 to 151 (PNSD…NNAA), 153 to 192 (AFNRDIIRDLGGLPIVAKILNTRDPIVKEKALIVLNNLSV), and 233 to 272 (VTNEYQHMLANSISDFFRLFSAGNEETKLQVLKLLLNLAE).

Belongs to the eutherian X-chromosome-specific Armcx family. As to quaternary structure, interacts (via ARM domain) with MIRO1, MIRO2 and TRAK2. The interaction with Miro is calcium-dependent. Interacts with SOX10.

Its subcellular location is the mitochondrion outer membrane. The protein localises to the cytoplasm. The protein resides in the nucleus. Functionally, regulates mitochondrial aggregation and transport in axons in living neurons. May link mitochondria to the TRAK2-kinesin motor complex via its interaction with Miro and TRAK2. Mitochondrial distribution and dynamics is regulated through ARMCX3 protein degradation, which is promoted by PCK and negatively regulated by WNT1. Enhances the SOX10-mediated transactivation of the neuronal acetylcholine receptor subunit alpha-3 and beta-4 subunit gene promoters. The sequence is that of Armadillo repeat-containing X-linked protein 3 (ARMCX3) from Pongo abelii (Sumatran orangutan).